A 586-amino-acid polypeptide reads, in one-letter code: CTP synthase (586 aa).

The tract at residues 1–278 is amidoligase domain; it reads MRKHPQTATK…DAFVVRRLNL (278 aa). Ser-20 contributes to the CTP binding site. Residue Ser-20 participates in UTP binding. ATP is bound by residues 21–26 and Asp-78; that span reads SLGKGL. The Mg(2+) site is built by Asp-78 and Glu-152. CTP contacts are provided by residues 159-161, 199-204, and Lys-235; these read DIE and KTKPTQ. UTP-binding positions include 199 to 204 and Lys-235; that span reads KTKPTQ. The Glutamine amidotransferase type-1 domain occupies 303-551; that stretch reads RIALVGKYVE…VGAAIDYKAG (249 aa). Gly-366 lines the L-glutamine pocket. The active-site Nucleophile; for glutamine hydrolysis is Cys-393. Residues 394–397, Glu-416, and Arg-477 each bind L-glutamine; that span reads LGLQ. Residues His-524 and Glu-526 contribute to the active site. The tract at residues 560 to 586 is disordered; that stretch reads EIPEHTPNGSSHRDGVGQPLPEPASRG.

It belongs to the CTP synthase family. As to quaternary structure, homotetramer.

The catalysed reaction is UTP + L-glutamine + ATP + H2O = CTP + L-glutamate + ADP + phosphate + 2 H(+). The enzyme catalyses L-glutamine + H2O = L-glutamate + NH4(+). It carries out the reaction UTP + NH4(+) + ATP = CTP + ADP + phosphate + 2 H(+). The protein operates within pyrimidine metabolism; CTP biosynthesis via de novo pathway; CTP from UDP: step 2/2. Its activity is regulated as follows. Allosterically activated by GTP, when glutamine is the substrate; GTP has no effect on the reaction when ammonia is the substrate. The allosteric effector GTP functions by stabilizing the protein conformation that binds the tetrahedral intermediate(s) formed during glutamine hydrolysis. Inhibited by the product CTP, via allosteric rather than competitive inhibition. In terms of biological role, catalyzes the ATP-dependent amination of UTP to CTP with either L-glutamine or ammonia as the source of nitrogen. Regulates intracellular CTP levels through interactions with the four ribonucleotide triphosphates. The protein is CTP synthase of Mycobacterium tuberculosis (strain CDC 1551 / Oshkosh).